A 396-amino-acid polypeptide reads, in one-letter code: L-lactate dehydrogenase (396 aa).

The region spanning Met-1–Ser-380 is the FMN hydroxy acid dehydrogenase domain. Tyr-24 contacts substrate. Positions 106 and 127 each coordinate FMN. Residue Tyr-129 participates in substrate binding. An FMN-binding site is contributed by Thr-155. Arg-164 is a substrate binding site. Lys-251 contacts FMN. His-275 serves as the catalytic Proton acceptor. Arg-278 contacts substrate. Asp-306–Arg-330 is an FMN binding site.

The protein belongs to the FMN-dependent alpha-hydroxy acid dehydrogenase family. FMN is required as a cofactor.

It is found in the cell inner membrane. It carries out the reaction (S)-lactate + A = pyruvate + AH2. In terms of biological role, catalyzes the conversion of L-lactate to pyruvate. Is coupled to the respiratory chain. This chain is L-lactate dehydrogenase, found in Escherichia coli (strain SMS-3-5 / SECEC).